The following is a 275-amino-acid chain: Trypsin-4 (275 aa).

Positions 1-18 (MSNKITILLAVLLAVVAC) are cleaved as a signal peptide. Positions 19 to 48 (AQAHASHQRRVPYPLPRFLPRPHHTVSNHR) are cleaved as a propeptide — activation peptide. Positions 49–274 (IVGGFEIDVA…VRDWIRETCG (226 aa)) constitute a Peptidase S1 domain. A disulfide bond links Cys-74 and Cys-90. Catalysis depends on charge relay system residues His-89 and Asp-134. 2 cysteine pairs are disulfide-bonded: Cys-199/Cys-215 and Cys-226/Cys-250. Residue Ser-230 is the Charge relay system of the active site.

Belongs to the peptidase S1 family. As to expression, expressed in the midgut. Expression levels drop a few hours after blood feeding and pick up again 28 hours later.

It localises to the secreted. It catalyses the reaction Preferential cleavage: Arg-|-Xaa, Lys-|-Xaa.. Functionally, constitutive trypsin that is expressed 2 days after emergence, coinciding with host seeking behavior of the female. The polypeptide is Trypsin-4 (TRYP4) (Anopheles gambiae (African malaria mosquito)).